The sequence spans 129 residues: Photosystem II reaction center Psb28 protein (129 aa).

Positions G110–G129 are disordered.

The protein belongs to the Psb28 family. In terms of assembly, part of the photosystem II complex.

It localises to the cellular thylakoid membrane. In Synechococcus sp. (strain WH7803), this protein is Photosystem II reaction center Psb28 protein.